Reading from the N-terminus, the 464-residue chain is RCC1-like G exchanging factor-like protein (464 aa).

The N-terminal 37 residues, 1–37, are a transit peptide targeting the mitochondrion; sequence MALVALVAGARLGRRLSGPGLGRGHWTAAGRSRSRRE. 7 RCC1 repeats span residues 58-124, 128-191, 193-247, 248-300, 302-353, 354-411, and 412-461; these read ADRV…LSSK, VTKV…VLTD, EGVF…FLTD, KGEV…AVSA, GGLF…VLNG, EGHV…ALTN, and KGEL…TLAK.

In terms of assembly, forms a regulatory protein-RNA complex, consisting of RCC1L, NGRN, RPUSD3, RPUSD4, TRUB2, FASTKD2 and 16S mt-rRNA. Interacts with 16S mt-rRNA; this interaction is direct. Interacts with OPA1; this interaction is direct. As to quaternary structure, asociates with the mitochondrial ribosome large subunit (mt-LSU). Asociates with the mitochondrial ribosome small subunit (mt-SSU). Ubiquitous.

It is found in the mitochondrion membrane. It localises to the mitochondrion inner membrane. Guanine nucleotide exchange factor (GEF) for mitochondrial dynamin-related GTPase OPA1. Activates OPA1, by exchanging bound GDP for free GTP, and drives OPA1 and MFN1-dependent mitochondrial fusion. Plays an essential role in mitochondrial ribosome biogenesis. As a component of a functional protein-RNA module, consisting of RCC1L, NGRN, RPUSD3, RPUSD4, TRUB2, FASTKD2 and 16S mitochondrial ribosomal RNA (16S mt-rRNA), controls 16S mt-rRNA abundance and is required for intra-mitochondrial translation of core subunits of the oxidative phosphorylation system. In terms of biological role, plays an essential role in mitochondrial ribosome biogenesis via its association with GTPases that play a role in the assembly of the large ribosome subunit. Functionally, plays an essential role in mitochondrial ribosome biogenesis via its association with GTPases that play a role in the assembly of the small ribosome subunit. This Homo sapiens (Human) protein is RCC1-like G exchanging factor-like protein.